The chain runs to 505 residues: MNVFLMFSLLFLAALGSCADDRNPLEECFRETDYEEFLEIARNGLKKTSNPKHVVIVGAGMSGLSAAYVLAGAGHQVTVLEASERAGGRVRTYRNDKEGWYANLGPMRLPEKHRIVREYIRKFGLQLNEFSQENDNAWHFIKNIRKRVGEVKKDPGVLKYPVKPSEEGKSAGQLYEESLRKVEKELKRTNCSYILNKYDTYSTKEYLIKEGNLSPGAVDMIGDLLNEDSGYYVSFIESMKHDDIFAYEKRFDEIVGGMDQLPTSMYQAIEEKVRFNTRVIKIQQNAKKVTVTYQTPAKDTSLVTADYVIVCTTSRAARRINFRPPLPPKKAHALRSVHYRSGTKIFLTCTKKFWEDDGIHGGKSTTDLPSRFIYYPNHNFTSGVGVIIAYGIGDDANFFQALDFKSCADIVMNDLSLIHQLPKKDIQAFCYPSMIQKWSLDKYAMGGITTFTPYQFQHFSEALTAPVGRIFFAGEYTAHAHGWIDSTIKSGLTAARDVNRASENP.

The N-terminal stretch at 1–18 is a signal peptide; that stretch reads MNVFLMFSLLFLAALGSC. Residues C28 and C191 are joined by a disulfide bond. Residues 61-62, 81-82, R89, and 105-108 each bind FAD; these read MS, EA, and GPMR. Substrate is bound at residue R108. N190 is a glycosylation site (N-linked (GlcNAc...) asparagine). H241 provides a ligand contact to substrate. Residue V279 participates in FAD binding. A disulfide bridge connects residues C349 and C430. A glycan (N-linked (GlcNAc...) asparagine) is linked at N379. Position 390 (Y390) interacts with substrate. FAD-binding positions include E475 and 482-487; that span reads GWIDST. 482 to 483 lines the substrate pocket; the sequence is GW.

This sequence belongs to the flavin monoamine oxidase family. FIG1 subfamily. As to quaternary structure, monomer. This is in contrast with most of its orthologs, that are non-covalently linked homodimers. The cofactor is FAD. Post-translationally, N-glycosylated. In terms of tissue distribution, expressed by the venom gland.

The protein localises to the secreted. The enzyme catalyses an L-alpha-amino acid + O2 + H2O = a 2-oxocarboxylate + H2O2 + NH4(+). It carries out the reaction L-leucine + O2 + H2O = 4-methyl-2-oxopentanoate + H2O2 + NH4(+). In terms of biological role, catalyzes an oxidative deamination of predominantly hydrophobic and aromatic L-amino acids, thus producing hydrogen peroxide that may contribute to the diverse toxic effects of this enzyme. Shows activity on L-Leu. Exhibits diverse biological activities, such as hemorrhage, edema, antibacterial and antiparasitic activities, as well as regulation of platelet aggregation. Effects of snake L-amino oxidases on platelets are controversial, since they either induce aggregation or inhibit agonist-induced aggregation. These different effects are probably due to different experimental conditions. This protein has an ability to induce hemolysis and apoptosis. The polypeptide is L-amino-acid oxidase (Protobothrops flavoviridis (Habu)).